A 752-amino-acid chain; its full sequence is Peptidyl-prolyl cis-trans isomerase G (752 aa).

The PPIase cyclophilin-type domain occupies 11 to 176 (FFDIAINNQP…AEVRILSCGE (166 aa)). The span at 182-193 (KVKKEEKKRHKS) shows a compositional bias: basic residues. Residues 182–752 (KVKKEEKKRH…SPGTDEDKSG (571 aa)) form a disordered region. The span at 194-214 (SSSSSSSDSDSSSDSQSSSES) shows a compositional bias: low complexity. The span at 226–251 (RKRKKKHRKNSRKHKKEKKKRKKSKK) shows a compositional bias: basic residues. A phosphoserine mark is found at Ser-252, Ser-254, Ser-255, Ser-257, and Ser-288. Residues 290 to 308 (PKADDKERKNREREREREC) are compositionally biased toward basic and acidic residues. Residue Ser-313 is modified to Phosphoserine. The span at 327–345 (SGRKIKGRGPRRYRTPSRS) shows a compositional bias: basic residues. Basic and acidic residues-rich tracts occupy residues 346–366 (RSRDRFRRSETPPHWRQEMQR) and 377–447 (RWIK…DKYN). Ser-354 carries the post-translational modification Phosphoserine. Position 356 is a phosphothreonine (Thr-356). Position 384 is a phosphoserine (Ser-384). A Glycyl lysine isopeptide (Lys-Gly) (interchain with G-Cter in SUMO2) cross-link involves residue Lys-390. Phosphoserine is present on residues Ser-395, Ser-411, and Ser-413. Residues 448 to 461 (KNKVKKRGKSKSRS) are compositionally biased toward basic residues. Basic and acidic residues-rich tracts occupy residues 462-552 (KSKE…DLTK) and 577-598 (RSHDRDRSRSKEYHRYREQEYR). A compositionally biased stretch (basic residues) spans 599-625 (RRGRSRSRDRRTPGRSRSKDRRRRRRD). The segment covering 626–684 (SRSSEREESQSRNKDKYRSQESKSSHRKENSEGEKRTYSKSRDHNSSSNNREKKADREQ) has biased composition (basic and acidic residues). Phosphoserine is present on residues Ser-685 and Ser-688. A compositionally biased stretch (polar residues) spans 685–705 (SPVSKTKQSSQDNEVKSSTLK). A Glycyl lysine isopeptide (Lys-Gly) (interchain with G-Cter in SUMO2) cross-link involves residue Lys-691. A phosphoserine mark is found at Ser-694, Ser-742, and Ser-743. The span at 706 to 752 (NQEDEKTRSPVEKENQKSKGQENDHVHDKNKKCDHESSPGTDEDKSG) shows a compositional bias: basic and acidic residues. Thr-746 carries the phosphothreonine modification. The residue at position 751 (Ser-751) is a Phosphoserine.

Interacts with CLK1, PNN and with the phosphorylated C-terminal domain of RNA polymerase II.

The protein resides in the nucleus matrix. It is found in the nucleus speckle. It carries out the reaction [protein]-peptidylproline (omega=180) = [protein]-peptidylproline (omega=0). Inhibited by cyclosporin A (CsA). Its function is as follows. PPIase that catalyzes the cis-trans isomerization of proline imidic peptide bonds in oligopeptides and may therefore assist protein folding. May be implicated in the folding, transport, and assembly of proteins. May play an important role in the regulation of pre-mRNA splicing. This is Peptidyl-prolyl cis-trans isomerase G (Ppig) from Mus musculus (Mouse).